Here is a 564-residue protein sequence, read N- to C-terminus: Beta-hexosaminidase subunit B2 (564 aa).

Residues M1–G19 form the signal peptide. Residues N43, N84, N303, and N347 are each glycosylated (N-linked (GlcNAc...) asparagine). E357 serves as the catalytic Proton donor. N-linked (GlcNAc...) asparagine glycosylation is found at N364, N377, N439, N524, and N551.

Belongs to the glycosyl hydrolase 20 family.

It is found in the lysosome. It catalyses the reaction Hydrolysis of terminal non-reducing N-acetyl-D-hexosamine residues in N-acetyl-beta-D-hexosaminides.. Responsible for the degradation of GM2 gangliosides, and a variety of other molecules containing terminal N-acetyl hexosamines. This is Beta-hexosaminidase subunit B2 (hexb2) from Dictyostelium discoideum (Social amoeba).